We begin with the raw amino-acid sequence, 284 residues long: Bifunctional protein FolD (284 aa).

NADP(+) is bound by residues 166-168 (GAS), S191, and I232.

This sequence belongs to the tetrahydrofolate dehydrogenase/cyclohydrolase family. Homodimer.

It carries out the reaction (6R)-5,10-methylene-5,6,7,8-tetrahydrofolate + NADP(+) = (6R)-5,10-methenyltetrahydrofolate + NADPH. The enzyme catalyses (6R)-5,10-methenyltetrahydrofolate + H2O = (6R)-10-formyltetrahydrofolate + H(+). It participates in one-carbon metabolism; tetrahydrofolate interconversion. Functionally, catalyzes the oxidation of 5,10-methylenetetrahydrofolate to 5,10-methenyltetrahydrofolate and then the hydrolysis of 5,10-methenyltetrahydrofolate to 10-formyltetrahydrofolate. In Neisseria gonorrhoeae (strain ATCC 700825 / FA 1090), this protein is Bifunctional protein FolD.